The following is a 354-amino-acid chain: Phenylalanine--tRNA ligase alpha subunit (354 aa).

E279 contributes to the Mg(2+) binding site.

The protein belongs to the class-II aminoacyl-tRNA synthetase family. Phe-tRNA synthetase alpha subunit type 1 subfamily. As to quaternary structure, tetramer of two alpha and two beta subunits. Requires Mg(2+) as cofactor.

The protein resides in the cytoplasm. The catalysed reaction is tRNA(Phe) + L-phenylalanine + ATP = L-phenylalanyl-tRNA(Phe) + AMP + diphosphate + H(+). This is Phenylalanine--tRNA ligase alpha subunit from Cupriavidus pinatubonensis (strain JMP 134 / LMG 1197) (Cupriavidus necator (strain JMP 134)).